Consider the following 376-residue polypeptide: NIF3-like protein 1 (376 aa).

The residue at position 108 (Lys108) is an N6-acetyllysine. Residues Leu243–Val376 form a mediates interaction with COPS2 region. Thr254 carries the post-translational modification Phosphothreonine. Phosphoserine is present on Ser258.

The protein belongs to the GTP cyclohydrolase I type 2/NIF3 family. Homodimer. Interacts with COPS2. Interacts with THOC7. Ubiquitous. Detected in all tissues tested with higher expression in cerebellum, heart and kidney and to a lower level in cerebrum, lung, liver, spleen and muscle.

It localises to the cytoplasm. The protein localises to the nucleus. Functionally, may function as a transcriptional corepressor through its interaction with COPS2, negatively regulating the expression of genes involved in neuronal differentiation. The polypeptide is NIF3-like protein 1 (Mus musculus (Mouse)).